Reading from the N-terminus, the 883-residue chain is MGFGWQGSVSIAFTALAFVVMAADWVGPDVTFTVLLAFLTAFDGQIVTVAKAAAGYGNTGLLTVIFLYWVAEGITQTGGLELIMNFVLGRSRSVHWALARSMFPVMCLSAFLNNTPCVTFMIPILISWGRRCGVPIKKLLIPLSYASVLGGTCTSIGTSTNLVIVGLQDARYTKAKQLDQAKFQIFDIAPYGVPYALWGFVFILLTQAFLLPGNSSRYAKDLLIAVRVLPSSSVAKKKLKDSGLLQQSGFSVSGIYRDGKYLSKPDPNWVLEPNDILYAAGEFDVVEFVGEEFGLGLVNADAETSAERPFTTGEESVFTPTGGAPYQKLVQATIAPTSDLIGRTVREVSWQGRFGLIPVAIQRGNGREDGRLNDVVLAAGDVLILDTTPFYDEEREDSKNNFAGKVRAVKDGAAKEFVVGVKVKKSSEVVNKTVSAAGLRGIPGLFVLSVDRADGSSVEASDYLYKIQPDDTIWIATDIGAVGFLAKFPGLELVQQEQVDKTGTSILYRHLVQAAVSHKGPIVGKTVRDVRFRTLYNAAVVAVHREGARVPLKVQDIVLQGGDVLLISCHTNWADEHRHDKSFVLLQPVPDSSPPKRSRMVIGVLLATGMVLTQIVGGLKSREYIHLWPAAVLTSALMLLTGCMNADQARKAIYWDVYLTIAAAFGVSAALEGTGVAASFANGIISIGKNLHSDGAALIAIYIATAMLSELLTNNAAGAIMYPIAAIAGDALKISPKETSVAIMLGASAGFINPFSYQCNLMVYAAGNYSVREFAIIGAPFQIWLMIVAGFILCYMKEWHQVWIVSWICTAGIVLLPALYFLLPTKVQLRIDAFFDRVAQTLNPKLIIERRNSIRRQASRTGSDGTGSSDSPRALGVPKVITA.

The next 6 helical transmembrane spans lie at 3–23, 30–50, 60–80, 106–126, 139–159, and 185–205; these read FGWQ…VMAA, VTFT…VTVA, GLLT…TGGL, MCLS…PILI, LLIP…IGTS, and IFDI…FILL. 4 RCK C-terminal domains span residues 211–295, 317–401, 406–491, and 497–583; these read LPGN…EFGL, VFTP…SKNN, VRAV…FPGL, and EQVD…DKSF. The next 6 helical transmembrane spans lie at 600-620, 624-644, 657-677, 693-713, 774-794, and 802-822; these read MVIG…GGLK, YIHL…TGCM, VYLT…TGVA, SDGA…ELLT, FAII…FILC, and VWIV…LYFL. Residues 857-883 are disordered; sequence QASRTGSDGTGSSDSPRALGVPKVITA. The span at 861-871 shows a compositional bias: low complexity; it reads TGSDGTGSSDS.

The protein belongs to the divalent anion:Na+ symporter (DASS) superfamily. Na+/sulfate symporter (TC 2.A.47.4) family.

It is found in the cell membrane. Na(+)/sulfate cotransporter with a probable high-affinity for sulfate and a proteasome dependent turnover. This Chlamydomonas reinhardtii (Chlamydomonas smithii) protein is Sodium/sulfate cotransporter 2 (SLT2).